Here is a 954-residue protein sequence, read N- to C-terminus: Glycine dehydrogenase (decarboxylating) (954 aa).

N6-(pyridoxal phosphate)lysine is present on Lys-704.

This sequence belongs to the GcvP family. As to quaternary structure, the glycine cleavage system is composed of four proteins: P, T, L and H. Pyridoxal 5'-phosphate serves as cofactor.

The enzyme catalyses N(6)-[(R)-lipoyl]-L-lysyl-[glycine-cleavage complex H protein] + glycine + H(+) = N(6)-[(R)-S(8)-aminomethyldihydrolipoyl]-L-lysyl-[glycine-cleavage complex H protein] + CO2. Its function is as follows. The glycine cleavage system catalyzes the degradation of glycine. The P protein binds the alpha-amino group of glycine through its pyridoxal phosphate cofactor; CO(2) is released and the remaining methylamine moiety is then transferred to the lipoamide cofactor of the H protein. The sequence is that of Glycine dehydrogenase (decarboxylating) from Vibrio vulnificus (strain CMCP6).